The following is a 256-amino-acid chain: UPF0259 membrane protein plu2479 (256 aa).

The next 5 membrane-spanning stretches (helical) occupy residues 23-43, 89-109, 132-152, 192-212, and 221-241; these read TLTL…LFIP, IFSS…LVAA, LFLL…LMLV, LLVP…FIID, and MAGI…LIYL.

It belongs to the UPF0259 family.

The protein localises to the cell inner membrane. This Photorhabdus laumondii subsp. laumondii (strain DSM 15139 / CIP 105565 / TT01) (Photorhabdus luminescens subsp. laumondii) protein is UPF0259 membrane protein plu2479.